We begin with the raw amino-acid sequence, 282 residues long: Undecaprenyl-diphosphatase (282 aa).

Helical transmembrane passes span 40-60 (GAAF…IYFF), 85-105 (AKMG…GLLF), 117-137 (YWIS…EWLI), 158-178 (ALII…RSGV), 193-213 (AARF…IYQL), 231-251 (IVAT…LITF), and 258-278 (AVFI…IATG).

It belongs to the UppP family.

The protein localises to the cell inner membrane. It carries out the reaction di-trans,octa-cis-undecaprenyl diphosphate + H2O = di-trans,octa-cis-undecaprenyl phosphate + phosphate + H(+). Catalyzes the dephosphorylation of undecaprenyl diphosphate (UPP). Confers resistance to bacitracin. The chain is Undecaprenyl-diphosphatase from Prosthecochloris aestuarii (strain DSM 271 / SK 413).